We begin with the raw amino-acid sequence, 129 residues long: MDLDTKEIIKNMDLKFRNIDGKKLLLAISTDKDRNILMTAFMNEESLEKSIETGFMHYYSTSRNKLWRKGEESGNVQKIIDVFRDCDGDALLFTVEQTGWACHEGYMSCFHNKIDLNTGKFTVVGNKLD.

A Mg(2+)-binding site is contributed by aspartate 85. Residue cysteine 86 participates in Zn(2+) binding. The Mg(2+) site is built by aspartate 87 and aspartate 89. 2 residues coordinate Zn(2+): cysteine 102 and cysteine 109.

The protein belongs to the PRA-CH family. Homodimer. The cofactor is Mg(2+). Requires Zn(2+) as cofactor.

The protein localises to the cytoplasm. The catalysed reaction is 1-(5-phospho-beta-D-ribosyl)-5'-AMP + H2O = 1-(5-phospho-beta-D-ribosyl)-5-[(5-phospho-beta-D-ribosylamino)methylideneamino]imidazole-4-carboxamide. Its pathway is amino-acid biosynthesis; L-histidine biosynthesis; L-histidine from 5-phospho-alpha-D-ribose 1-diphosphate: step 3/9. In terms of biological role, catalyzes the hydrolysis of the adenine ring of phosphoribosyl-AMP. This chain is Phosphoribosyl-AMP cyclohydrolase, found in Methanococcus maripaludis (strain C7 / ATCC BAA-1331).